We begin with the raw amino-acid sequence, 556 residues long: MSVSAFNRRWAAVILEALTRHGVQHICIAPGSRSTPLTLAAAENRAFIHHTHFDERGLGHLALGLAKASRQPVAVIVTSGTATANLYPALIEAGLTGEKLILLTADRPPELIDCGANQAIRQPGMFASHPSQTISLPRPSQDIPARWLVSTIDQALGALHAGGVHINCPFAEPLYGDMDETGVEWQQQLGNWWQSDKPWLRQALQLESEKQRDWFFWRQKRGVVVAGRMSAAEGKKVAEWAQTLGWPLIGDVLSQTGQPLQCADLWLGNGKAVSELAQAQIVVQLGSSLTGKRILQWQATCEPDEYWLVDNLPGRLDPAQHRGRRLLASVERWLELHPAEKRQPWATVIPELSRQAWQAAVASNEPFGEAQLAQRIRRYLPEQGQLFVGNSLVVRLIDALAQLPAGYPVYSNRGASGIDGLIATAAGVQRASARPTLAIVGDLSALYDLNSLALLRQASAPLVLIVVNNNGGQIFSMLPTPQDERRQFYLMPQDVDFSHAAAMFGLAYHRPDDWQSLDEALAGAWRRAGATVIELAVNETDGTQTLQQLLAQVSRL.

This sequence belongs to the TPP enzyme family. MenD subfamily. In terms of assembly, homodimer. Requires Mg(2+) as cofactor. Mn(2+) serves as cofactor. Thiamine diphosphate is required as a cofactor.

The enzyme catalyses isochorismate + 2-oxoglutarate + H(+) = 5-enolpyruvoyl-6-hydroxy-2-succinyl-cyclohex-3-ene-1-carboxylate + CO2. Its pathway is quinol/quinone metabolism; 1,4-dihydroxy-2-naphthoate biosynthesis; 1,4-dihydroxy-2-naphthoate from chorismate: step 2/7. It participates in quinol/quinone metabolism; menaquinone biosynthesis. In terms of biological role, catalyzes the thiamine diphosphate-dependent decarboxylation of 2-oxoglutarate and the subsequent addition of the resulting succinic semialdehyde-thiamine pyrophosphate anion to isochorismate to yield 2-succinyl-5-enolpyruvyl-6-hydroxy-3-cyclohexene-1-carboxylate (SEPHCHC). The chain is 2-succinyl-5-enolpyruvyl-6-hydroxy-3-cyclohexene-1-carboxylate synthase from Klebsiella pneumoniae (strain 342).